A 213-amino-acid chain; its full sequence is MDTLWDISPPVSPATPVWPGDTPVSVERVWRMEAGSPVNVARLTLSPHTGAHCDAPLHYDADGAPIGAVPLDTYLGPCRVIHCIGAAPVVRPADIEAALDGVPPRVLLRTYARASVEQWDSGFCAVAPETVDLLAAHGVKLIGIDTPSLDPQESKTMDAHHRVRAHRMAILEGIVLDDVPPGDYELIALPLKFATLDASPVRAVLRALPGHSS.

W18 contacts substrate. Zn(2+)-binding residues include H48, H52, and D54. The active-site Proton donor/acceptor is the H58. Zn(2+) is bound by residues H160 and E172.

It belongs to the Cyclase 1 superfamily. KynB family. In terms of assembly, homodimer. Requires Zn(2+) as cofactor.

The catalysed reaction is N-formyl-L-kynurenine + H2O = L-kynurenine + formate + H(+). It participates in amino-acid degradation; L-tryptophan degradation via kynurenine pathway; L-kynurenine from L-tryptophan: step 2/2. Its function is as follows. Catalyzes the hydrolysis of N-formyl-L-kynurenine to L-kynurenine, the second step in the kynurenine pathway of tryptophan degradation. This chain is Kynurenine formamidase, found in Burkholderia ambifaria (strain ATCC BAA-244 / DSM 16087 / CCUG 44356 / LMG 19182 / AMMD) (Burkholderia cepacia (strain AMMD)).